Consider the following 390-residue polypeptide: Transforming growth factor beta-1 proprotein (390 aa).

Positions 1–29 are cleaved as a signal peptide; the sequence is MPPSGLRLLPLLLPLLWLLVLTPGRPAAG. The interval 30–74 is straightjacket domain; sequence LSTCKTIDMELVKRKRIEAIRGQILSKLRLASPPSQGEVPPGPLP. The tract at residues 75-271 is arm domain; sequence EAVLALYNST…ATPLERAQQL (197 aa). N-linked (GlcNAc...) asparagine glycans are attached at residues asparagine 82, asparagine 136, and asparagine 176. The segment at 226 to 252 is bowtie tail; the sequence is DSKDNTLRVGINGFSSSRRGDLATIDG. The Cell attachment site motif lies at 244–246; that stretch reads RGD. 4 cysteine pairs are disulfide-bonded: cysteine 285/cysteine 294, cysteine 293/cysteine 356, cysteine 322/cysteine 387, and cysteine 326/cysteine 389.

It belongs to the TGF-beta family. In terms of assembly, homodimer; disulfide-linked. Interacts with the serine proteases, HTRA1 and HTRA3: the interaction with either inhibits TGFB1-mediated signaling and the HTRA protease activity is required for this inhibition. May interact with THSD4; this interaction may lead to sequestration by FBN1 microfibril assembly and attenuation of TGFB signaling. Interacts with CD109, DPT and ASPN. Interacts with EFEMP2. Interacts with TSKU; the interaction contributes to regulation of the hair cycle. Interacts with TGFBR3. Homodimer; disulfide-linked. Interacts with transforming growth factor beta-1 (TGF-beta-1) chain; interaction is non-covalent and maintains TGF-beta-1 in a latent state; each latency-associated peptide (LAP) monomer interacts with TGF-beta-1 in the other monomer. Interacts with LTBP1; leading to regulation of TGF-beta-1 activation. Interacts with LRRC32/GARP; leading to regulation of TGF-beta-1 activation on the surface of activated regulatory T-cells (Tregs). Interacts with LRRC33/NRROS; leading to regulation of TGF-beta-1 activation in macrophages and microglia. Interacts (via cell attachment site) with integrins ITGAV and ITGB6 (ITGAV:ITGB6), leading to release of the active TGF-beta-1. Latency-associated peptide: Interacts with NREP; the interaction results in a decrease in TGFB1 autoinduction. Interacts with HSP90AB1; inhibits latent TGFB1 activation. As to quaternary structure, homodimer; disulfide-linked. Interacts with TGF-beta receptors (TGFBR1 and TGFBR2), leading to signal transduction. In terms of processing, transforming growth factor beta-1 proprotein: The precursor proprotein is cleaved in the Golgi apparatus by FURIN to form Transforming growth factor beta-1 (TGF-beta-1) and Latency-associated peptide (LAP) chains, which remain non-covalently linked, rendering TGF-beta-1 inactive. Post-translationally, N-glycosylated. Deglycosylation leads to activation of Transforming growth factor beta-1 (TGF-beta-1); mechanisms triggering deglycosylation-driven activation of TGF-beta-1 are however unclear.

Its subcellular location is the secreted. It localises to the extracellular space. It is found in the extracellular matrix. In terms of biological role, transforming growth factor beta-1 proprotein: Precursor of the Latency-associated peptide (LAP) and Transforming growth factor beta-1 (TGF-beta-1) chains, which constitute the regulatory and active subunit of TGF-beta-1, respectively. Its function is as follows. Required to maintain the Transforming growth factor beta-1 (TGF-beta-1) chain in a latent state during storage in extracellular matrix. Associates non-covalently with TGF-beta-1 and regulates its activation via interaction with 'milieu molecules', such as LTBP1, LRRC32/GARP and LRRC33/NRROS, that control activation of TGF-beta-1. Interaction with LRRC33/NRROS regulates activation of TGF-beta-1 in macrophages and microglia. Interaction with LRRC32/GARP controls activation of TGF-beta-1 on the surface of activated regulatory T-cells (Tregs). Interaction with integrins (ITGAV:ITGB6 or ITGAV:ITGB8) results in distortion of the Latency-associated peptide chain and subsequent release of the active TGF-beta-1. Multifunctional protein that regulates the growth and differentiation of various cell types and is involved in various processes, such as normal development, immune function, microglia function and responses to neurodegeneration. Activation into mature form follows different steps: following cleavage of the proprotein in the Golgi apparatus, Latency-associated peptide (LAP) and Transforming growth factor beta-1 (TGF-beta-1) chains remain non-covalently linked rendering TGF-beta-1 inactive during storage in extracellular matrix. At the same time, LAP chain interacts with 'milieu molecules', such as LTBP1, LRRC32/GARP and LRRC33/NRROS that control activation of TGF-beta-1 and maintain it in a latent state during storage in extracellular milieus. TGF-beta-1 is released from LAP by integrins (ITGAV:ITGB6 or ITGAV:ITGB8): integrin-binding to LAP stabilizes an alternative conformation of the LAP bowtie tail and results in distortion of the LAP chain and subsequent release of the active TGF-beta-1. Once activated following release of LAP, TGF-beta-1 acts by binding to TGF-beta receptors (TGFBR1 and TGFBR2), which transduce signal. While expressed by many cells types, TGF-beta-1 only has a very localized range of action within cell environment thanks to fine regulation of its activation by Latency-associated peptide chain (LAP) and 'milieu molecules'. Plays an important role in bone remodeling: acts as a potent stimulator of osteoblastic bone formation, causing chemotaxis, proliferation and differentiation in committed osteoblasts. Can promote either T-helper 17 cells (Th17) or regulatory T-cells (Treg) lineage differentiation in a concentration-dependent manner. At high concentrations, leads to FOXP3-mediated suppression of RORC and down-regulation of IL-17 expression, favoring Treg cell development. At low concentrations in concert with IL-6 and IL-21, leads to expression of the IL-17 and IL-23 receptors, favoring differentiation to Th17 cells. Stimulates sustained production of collagen through the activation of CREB3L1 by regulated intramembrane proteolysis (RIP). Mediates SMAD2/3 activation by inducing its phosphorylation and subsequent translocation to the nucleus. Positively regulates odontoblastic differentiation in dental papilla cells, via promotion of IPO7-mediated translocation of phosphorylated SMAD2 to the nucleus and subsequent transcription of target genes. Can induce epithelial-to-mesenchymal transition (EMT) and cell migration in various cell types. The protein is Transforming growth factor beta-1 proprotein (TGFB1) of Equus caballus (Horse).